A 683-amino-acid polypeptide reads, in one-letter code: PTS system mannose-specific EIIBCA component (683 aa).

One can recognise a PTS EIIB type-1 domain in the interval 1-89 (MASKLTTTSQ…LKLDGMKHFA (89 aa)). Cys28 acts as the Phosphocysteine intermediate; for EIIB activity in catalysis. Residues 117 to 476 (EFLSDTFRPI…NEERDEARAK (360 aa)) form the PTS EIIC type-1 domain. A run of 10 helical transmembrane segments spans residues 126-146 (ILWALLGASLIITLLVLADTF), 162-182 (YVFLHSMWRSVFYFLPIMVGA), 193-213 (WIGAAIPAALLTPEFLALGSA), 225-245 (VLNDYSGQVFPPLIAAIGLYW), 260-280 (MVFVPFFSLLIMIPATAFLLG), 303-323 (FILSIVIPLLYPFLVPLGLHW), 344-364 (PMGAWNFACFGLVTGVFLLSI), 376-396 (LGGMLAGLLGGISEPSLYGVL), 409-429 (GCLAGGIVMGIFDIKAYAFVF), and 442-462 (LGYTIGIAVAFFVSMFLVLAL). Residues 550–654 (DPIFAAGKLG…PLITPVVVSN (105 aa)) form the PTS EIIA type-1 domain. The Tele-phosphohistidine intermediate; for EIIA activity role is filled by His602.

The protein resides in the cell membrane. The enzyme catalyses D-mannose(out) + N(pros)-phospho-L-histidyl-[protein] = D-mannose 6-phosphate(in) + L-histidyl-[protein]. Its function is as follows. The phosphoenolpyruvate-dependent sugar phosphotransferase system (sugar PTS), a major carbohydrate active -transport system, catalyzes the phosphorylation of incoming sugar substrates concomitantly with their translocation across the cell membrane. This system is involved in mannose transport. The sequence is that of PTS system mannose-specific EIIBCA component (ptsM) from Corynebacterium glutamicum (strain ATCC 13032 / DSM 20300 / JCM 1318 / BCRC 11384 / CCUG 27702 / LMG 3730 / NBRC 12168 / NCIMB 10025 / NRRL B-2784 / 534).